A 110-amino-acid chain; its full sequence is MASKDELACVYAALILLDDDVDITTEKVNTILRAAGVSVEPYWPGLFTKALEGLDLKSMITNVGSGVGAAPAAGGAAAATEAPAAKEEKKEEKKEESEEEDEDMGFGLFD.

Ala2 is subject to Blocked amino end (Ala). A compositionally biased stretch (low complexity) spans Ala69–Pro83. Residues Ala69–Asp110 are disordered. The span at Ala84 to Glu96 shows a compositional bias: basic and acidic residues. At Ser97 the chain carries Phosphoserine; in form eL12'-P.

Part of the ribosomal stalk of the large ribosomal subunit; P1 and P2 exist as dimers which assemble on the P0 scaffold. In terms of processing, phosphorylation of Ser-97 converts eL12' to eL12'-P.

Plays an important role in the elongation step of protein synthesis. The sequence is that of Large ribosomal subunit protein P1 from Artemia salina (Brine shrimp).